A 284-amino-acid polypeptide reads, in one-letter code: 2-dehydro-3-deoxyphosphooctonate aldolase (284 aa).

This sequence belongs to the KdsA family.

It is found in the cytoplasm. It carries out the reaction D-arabinose 5-phosphate + phosphoenolpyruvate + H2O = 3-deoxy-alpha-D-manno-2-octulosonate-8-phosphate + phosphate. Its pathway is carbohydrate biosynthesis; 3-deoxy-D-manno-octulosonate biosynthesis; 3-deoxy-D-manno-octulosonate from D-ribulose 5-phosphate: step 2/3. It functions in the pathway bacterial outer membrane biogenesis; lipopolysaccharide biosynthesis. The sequence is that of 2-dehydro-3-deoxyphosphooctonate aldolase from Cronobacter sakazakii (strain ATCC BAA-894) (Enterobacter sakazakii).